The primary structure comprises 172 residues: Nucleoside-triphosphatase THEP1 (172 aa).

Residues 11-18 (GKPGIGKT) and 101-108 (IILIDEIG) contribute to the ATP site.

The protein belongs to the THEP1 NTPase family.

The catalysed reaction is a ribonucleoside 5'-triphosphate + H2O = a ribonucleoside 5'-diphosphate + phosphate + H(+). Functionally, has nucleotide phosphatase activity towards ATP, GTP, CTP, TTP and UTP. May hydrolyze nucleoside diphosphates with lower efficiency. This Sulfolobus acidocaldarius (strain ATCC 33909 / DSM 639 / JCM 8929 / NBRC 15157 / NCIMB 11770) protein is Nucleoside-triphosphatase THEP1.